The chain runs to 319 residues: Peroxidase 13 (319 aa).

The signal sequence occupies residues 1-22 (MITIALFLVLLYFHDQLGYSAA). 4 disulfides stabilise this stretch: cysteine 33-cysteine 111, cysteine 66-cysteine 71, cysteine 117-cysteine 315, and cysteine 196-cysteine 222. The active-site Proton acceptor is histidine 64. 5 residues coordinate Ca(2+): aspartate 65, valine 68, glycine 70, aspartate 72, and serine 74. Residue proline 158 participates in substrate binding. Residue histidine 189 participates in heme b binding. Residue threonine 190 participates in Ca(2+) binding. Ca(2+)-binding residues include aspartate 235, serine 238, and aspartate 243. The N-linked (GlcNAc...) asparagine glycan is linked to asparagine 280.

The protein belongs to the peroxidase family. Classical plant (class III) peroxidase subfamily. It depends on heme b as a cofactor. The cofactor is Ca(2+).

It localises to the secreted. It carries out the reaction 2 a phenolic donor + H2O2 = 2 a phenolic radical donor + 2 H2O. Its function is as follows. Removal of H(2)O(2), oxidation of toxic reductants, biosynthesis and degradation of lignin, suberization, auxin catabolism, response to environmental stresses such as wounding, pathogen attack and oxidative stress. These functions might be dependent on each isozyme/isoform in each plant tissue. This chain is Peroxidase 13 (PER13), found in Arabidopsis thaliana (Mouse-ear cress).